Reading from the N-terminus, the 768-residue chain is DNA replication licensing factor MCM3 homolog 3 (768 aa).

The MCM domain occupies Thr-290–Ala-497. Gly-340–Ser-347 provides a ligand contact to ATP. The Arginine finger signature appears at Ser-472 to Asp-475. A compositionally biased stretch (basic and acidic residues) spans Glu-661 to Ala-670. The disordered stretch occupies residues Glu-661–Val-690. A compositionally biased stretch (gly residues) spans Ala-672–Ser-682.

The protein belongs to the MCM family.

It is found in the nucleus. The catalysed reaction is ATP + H2O = ADP + phosphate + H(+). Acts as a factor that allows the DNA to undergo a single round of replication per cell cycle. Required for DNA replication and cell proliferation. May act as a component of the MCM complex which is the putative replicative helicase of the replication licensing system in eukaryotic cells. The sequence is that of DNA replication licensing factor MCM3 homolog 3 (ROA3) from Zea mays (Maize).